A 93-amino-acid polypeptide reads, in one-letter code: UPF0358 protein BLi01701/BL02974 (93 aa).

The protein belongs to the UPF0358 family.

The polypeptide is UPF0358 protein BLi01701/BL02974 (Bacillus licheniformis (strain ATCC 14580 / DSM 13 / JCM 2505 / CCUG 7422 / NBRC 12200 / NCIMB 9375 / NCTC 10341 / NRRL NRS-1264 / Gibson 46)).